We begin with the raw amino-acid sequence, 719 residues long: DNA polymerase epsilon subunit B (719 aa).

The tract at residues 107–147 is disordered; that stretch reads SIPPKTKTYNNGGGKTTTIDRFLTKRPSPSDNDEGPLDQSI.

It belongs to the DNA polymerase epsilon subunit B family. As to quaternary structure, heterotetramer. Consists of four subunits: POL2, DPB2, DPB3 and DPB4.

It is found in the nucleus. As accessory component of the DNA polymerase epsilon (DNA polymerase II) participates in chromosomal DNA replication. The sequence is that of DNA polymerase epsilon subunit B (DPB2) from Candida glabrata (strain ATCC 2001 / BCRC 20586 / JCM 3761 / NBRC 0622 / NRRL Y-65 / CBS 138) (Yeast).